Consider the following 226-residue polypeptide: Charged multivesicular body protein 5 (226 aa).

Positions 21 to 93 (IAGVDARATN…NQSFNMEQAN (73 aa)) form a coiled coil. The span at 188–198 (KAPEAPSREPG) shows a compositional bias: basic and acidic residues. Residues 188–226 (KAPEAPSREPGADSIVPGKSTIETDEFGLPKIPTSLKTT) are disordered. At serine 201 the chain carries Phosphoserine. The residue at position 226 (threonine 226) is a Phosphothreonine.

Belongs to the SNF7 family. As to quaternary structure, probable peripherally associated component of the endosomal sorting required for transport complex III (ESCRT-III).

The protein localises to the endosome membrane. Functionally, probable peripherally associated component of the endosomal sorting required for transport complex III (ESCRT-III) which is involved in multivesicular bodies (MVBs) formation and sorting of endosomal cargo proteins into MVBs. MVBs contain intraluminal vesicles (ILVs) that are generated by invagination and scission from the limiting membrane of the endosome and are delivered to lysosomes enabling degradation of membrane proteins. Specifically down-regulates Notch signaling activity in the germarium, probably by facilitating Notch endocytosis. This chain is Charged multivesicular body protein 5, found in Drosophila melanogaster (Fruit fly).